The chain runs to 896 residues: Histone-lysine N-methyltransferase CLF (896 aa).

Disordered regions lie at residues 344 to 419 and 459 to 514; these read DNLK…NRRI and SGIK…DGCD. Residues 358 to 390 are compositionally biased toward low complexity; that stretch reads GSSGQKTKSQQSESSSTARVSSESSESEVQLLS. 3 stretches are compositionally biased toward polar residues: residues 391–400, 465–476, and 485–498; these read NKSPQHSPGL, VVSSQCNSPSTR, and QMEN…AQSD. Residues 504 to 514 are compositionally biased toward basic and acidic residues; the sequence is NNEHSATDGCD. The CXC domain occupies 633–732; that stretch reads RKRITERKDQ…TLGVPNQRGD (100 aa). One can recognise an SET domain in the interval 747–862; it reads QRVLLGRSDV…AGEELFYDYR (116 aa). An S-adenosyl-L-methionine-binding site is contributed by Tyr861. Residues 869–884 show a composition bias toward basic and acidic residues; sequence PAWARKPEGPGAKDDA. Residues 869-896 are disordered; that stretch reads PAWARKPEGPGAKDDAQPSTGRAKKLAH.

It belongs to the class V-like SAM-binding methyltransferase superfamily. Histone-lysine methyltransferase family. EZ subfamily. As to quaternary structure, interacts with FIE1. Component of the polycomb repressive complex 2 (PRC2), composed of the core PRC2 components FIE2, EMF2B and EZ1. PRC2 methylates 'Lys-27' residues of histone H3 (H3K27me3), leading to transcriptional repression of the affected target gene. In terms of tissue distribution, widely expressed. Highly expressed in young panicle.

It catalyses the reaction L-lysyl(27)-[histone H3] + 3 S-adenosyl-L-methionine = N(6),N(6),N(6)-trimethyl-L-lysyl(27)-[histone H3] + 3 S-adenosyl-L-homocysteine + 3 H(+). Functionally, polycomb group (PcG) protein. Catalytic subunit of some PcG multiprotein complex, which methylates 'Lys-27' of histone H3, leading to transcriptional repression of the affected target genes. PcG proteins act by forming multiprotein complexes, which are required to maintain the transcriptionally repressive state of homeotic genes throughout development. PcG proteins are not required to initiate repression, but to maintain it during later stages of development. Involved in the regulation of flowering. Represses flowering under long day (LD) conditions. Regulates the trimethylation on histone H3 'Lys-27' (H3K27me3) of the flowering regulators MADS14, MADS15, RFT1, EHD1, HD3A and LF. This is Histone-lysine N-methyltransferase CLF from Oryza sativa subsp. japonica (Rice).